We begin with the raw amino-acid sequence, 2003 residues long: Histone acetyltransferase KAT6A (2003 aa).

Residues 1–77 form the SAMD1-like winged helix (WH) domain; sequence MVKLANPLYT…LNSYKDPDNP (77 aa). The interval 1-144 is required for activation of RUNX1-1; sequence MVKLANPLYT…CGGSAAPGFH (144 aa). Positions 52–166 are required for nuclear localization; the sequence is ELSVKDGTIL…HGRLLKDGPL (115 aa). In terms of domain architecture, H15 spans 95–171; that stretch reads QSVDWNKLLK…KDGPLYRLNT (77 aa). Positions 144-663 are interaction with PML; that stretch reads HQQLRLAIKR…RKGYGRFLID (520 aa). An N6-acetyllysine modification is found at Lys-172. PHD-type zinc fingers lie at residues 206 to 265 and 262 to 313; these read IPIC…CKTC and CKTC…CRPR. The tract at residues 312–663 is interaction with RUNX1-1; sequence PRKKGRKLLQ…RKGYGRFLID (352 aa). Residues 336–377 form a disordered region; it reads GRPKNRLKKQNTVSKGPFSKVRTGPGRGRKRKITVSSQSASS. 2 positions are modified to N6-acetyllysine: Lys-350 and Lys-355. Thr-369 carries the phosphothreonine; by PKB/AKT1 modification. Ser-419 is subject to Phosphoserine. The tract at residues 439 to 466 is disordered; sequence RKKGNRKSSTSDWPTDNQDGWESKQENE. The segment covering 445–458 has biased composition (polar residues); that stretch reads KSSTSDWPTDNQDG. Ser-472 bears the Phosphoserine mark. The tract at residues 487 to 777 is catalytic; it reads IQEQALQKVG…VDPECLRWTP (291 aa). The MYST-type HAT domain occupies 503–777; that stretch reads PQVRCPSVIE…VDPECLRWTP (275 aa). Residues 506-809 form a mediates interaction with BRPF1, required for histone H3 acetyltransferase activity region; that stretch reads RCPSVIEFGK…EPQGQERELE (304 aa). Residues 536–561 form a C2HC MYST-type zinc finger; sequence LYLCEFCLKYMKSRTILQQHMKKCGW. Lys-603 carries the post-translational modification N6-acetyllysine; by autocatalysis. Acetyl-CoA-binding positions include 644 to 648 and 653 to 659; these read SCIMI and QRKGYGR. Glu-679 acts as the Proton donor/acceptor in catalysis. Ser-683 lines the acetyl-CoA pocket. A disordered region spans residues 784–939; sequence VVSEDEDEEA…DGKPDIPKGR (156 aa). Ser-786 bears the Phosphoserine mark. The segment covering 786-798 has biased composition (acidic residues); sequence SEDEDEEADEGEK. Residues 799–841 are compositionally biased toward basic and acidic residues; sequence EEPQGQERELETRVKVGKSVSREKKDQESSSLIETDKKPEVKE. 2 positions are modified to N6-acetyllysine: Lys-813 and Lys-816. Lys-836 participates in a covalent cross-link: Glycyl lysine isopeptide (Lys-Gly) (interchain with G-Cter in SUMO2). The span at 866–875 shows a compositional bias: basic residues; sequence RRGRCGRKNR. Positions 876 to 890 are enriched in basic and acidic residues; that stretch reads KTQERFGDKDSKMLV. At Tyr-901 the chain carries Phosphotyrosine. Residues 904–917 show a composition bias toward basic and acidic residues; the sequence is CEEKSETSQERFTE. Phosphoserine occurs at positions 941 and 954. Residues 983–1083 are disordered; that stretch reads GFSESSEEEE…EEEESELFPR (101 aa). Residue Lys-1007 is modified to N6-acetyllysine. Basic residues predominate over residues 1009-1030; sequence TLKRKKPILHRRRRVRKRKHHN. The span at 1031 to 1042 shows a compositional bias: low complexity; that stretch reads SSVVTETISETT. Acidic residues-rich tracts occupy residues 1043-1053 and 1065-1079; these read EVLDEPFEDSD and FEME…EESE. Residues Ser-1090, Ser-1091, and Ser-1115 each carry the phosphoserine modification. Disordered stretches follow at residues 1096–1174, 1197–1438, 1455–1533, 1546–1568, and 1631–1707; these read RCQS…RKPG, IKPG…GAYQ, HTDE…PSVS, DLGS…STMG, and TCVV…CSMN. Acidic residues predominate over residues 1107 to 1120; the sequence is EEEEEEEESDDADD. The segment covering 1136–1147 has biased composition (polar residues); the sequence is NSASLEPDTSTP. Positions 1148-1174 are enriched in basic residues; sequence MKKKKGWPKGKSRKPIHWKKRPGRKPG. Basic and acidic residues predominate over residues 1204–1229; the sequence is RTQENEEIVEVKEDLLEERKEEMHTE. Composition is skewed to acidic residues over residues 1230-1241 and 1282-1299; these read PDEEAEEEEDTT and EEPQ…DEVT. Basic and acidic residues predominate over residues 1317-1334; that stretch reads HLDSLKTKEPEEQPARED. Residue Lys-1336 forms a Glycyl lysine isopeptide (Lys-Gly) (interchain with G-Cter in SUMO2) linkage. 2 stretches are compositionally biased toward basic and acidic residues: residues 1352–1361 and 1393–1414; these read DSRENTKDKD and DSNT…HSEL. The segment covering 1473–1490 has biased composition (low complexity); it reads HNSPISSIPSHPSQSVRS. Composition is skewed to polar residues over residues 1502-1523 and 1550-1568; these read GYTQ…NMET and IEST…STMG. The interaction with RUNX1-2 stretch occupies residues 1511–1636; that stretch reads GSLSAPSMQN…KSPQTCVVER (126 aa). The interaction with PML stretch occupies residues 1511 to 1740; that stretch reads GSLSAPSMQN…YERIPGDFGA (230 aa). Pro residues-rich tracts occupy residues 1640 to 1673 and 1682 to 1698; these read NQQP…PPQP and QPPP…PQQQ. The segment at 1912 to 1947 is required for activation of RUNX1-2; the sequence is SMNMNTLNAMNSYRMTQPMMNSSYHSNPAYMNQTAQ.

It belongs to the MYST (SAS/MOZ) family. Component of the MOZ/MORF complex composed at least of ING5, KAT6A, KAT6B, MEAF6 and one of BRPF1, BRD1/BRPF2 and BRPF3. Interacts with RUNX2. Interacts with RUNX1; phosphorylation of RUNX1 enhances the interaction. Interacts with p53/TP53. Interacts with PML and this interaction positively regulates its acetylation activity towards p53/TP53. Autoacetylated. Autoacetylation at Lys-603 is required for proper function. In terms of processing, phosphorylation at Thr-369 by PKB/AKT1 inhibits its interaction with PML and negatively regulates its acetylation activity towards p53/TP53.

It is found in the nucleus. Its subcellular location is the nucleolus. It localises to the nucleoplasm. The protein localises to the PML body. It carries out the reaction L-lysyl-[protein] + acetyl-CoA = N(6)-acetyl-L-lysyl-[protein] + CoA + H(+). Functionally, histone acetyltransferase that acetylates lysine residues in histone H3 and histone H4 (in vitro). Component of the MOZ/MORF complex which has a histone H3 acetyltransferase activity. May act as a transcriptional coactivator for RUNX1 and RUNX2. Acetylates p53/TP53 at 'Lys-120' and 'Lys-382' and controls its transcriptional activity via association with PML. This Mus musculus (Mouse) protein is Histone acetyltransferase KAT6A (Kat6a).